A 228-amino-acid chain; its full sequence is Cytidylate kinase (228 aa).

Glycine 17–threonine 25 contributes to the ATP binding site.

The protein belongs to the cytidylate kinase family. Type 1 subfamily.

It is found in the cytoplasm. The catalysed reaction is CMP + ATP = CDP + ADP. It carries out the reaction dCMP + ATP = dCDP + ADP. This Burkholderia cenocepacia (strain HI2424) protein is Cytidylate kinase.